A 431-amino-acid chain; its full sequence is Probable ganciclovir kinase (431 aa).

The region spanning 79 to 368 is the Protein kinase domain; that stretch reads PQEDAVLGSG…KLSIGIDSFG (290 aa). Residues 85–93 and lysine 103 contribute to the ATP site; that span reads LGSGSFGSV. Aspartate 195 serves as the catalytic Proton acceptor.

Belongs to the protein kinase superfamily. Tyr protein kinase family. HCMV ganciclovir subfamily.

Its function is as follows. Phosphorylates the antiviral nucleoside analog ganciclovir. This Saimiriine herpesvirus 2 (strain 11) (SaHV-2) protein is Probable ganciclovir kinase (36).